Here is a 445-residue protein sequence, read N- to C-terminus: 3-phosphoshikimate 1-carboxyvinyltransferase (445 aa).

3-phosphoshikimate is bound by residues Lys-28, Ser-29, and Arg-33. Position 28 (Lys-28) interacts with phosphoenolpyruvate. Phosphoenolpyruvate contacts are provided by Gly-102 and Arg-130. Residues Ser-179, Ser-180, Gln-181, Glu-330, and His-357 each contribute to the 3-phosphoshikimate site. Residue Gln-181 coordinates phosphoenolpyruvate. The active-site Proton acceptor is the Glu-330. Phosphoenolpyruvate-binding residues include Arg-361, Arg-405, and Lys-430.

This sequence belongs to the EPSP synthase family. Monomer.

Its subcellular location is the cytoplasm. The catalysed reaction is 3-phosphoshikimate + phosphoenolpyruvate = 5-O-(1-carboxyvinyl)-3-phosphoshikimate + phosphate. It functions in the pathway metabolic intermediate biosynthesis; chorismate biosynthesis; chorismate from D-erythrose 4-phosphate and phosphoenolpyruvate: step 6/7. In terms of biological role, catalyzes the transfer of the enolpyruvyl moiety of phosphoenolpyruvate (PEP) to the 5-hydroxyl of shikimate-3-phosphate (S3P) to produce enolpyruvyl shikimate-3-phosphate and inorganic phosphate. The sequence is that of 3-phosphoshikimate 1-carboxyvinyltransferase from Bifidobacterium longum (strain DJO10A).